We begin with the raw amino-acid sequence, 314 residues long: 4-hydroxy-3-methylbut-2-enyl diphosphate reductase (314 aa).

Cysteine 12 provides a ligand contact to [4Fe-4S] cluster. Positions 41 and 74 each coordinate (2E)-4-hydroxy-3-methylbut-2-enyl diphosphate. Dimethylallyl diphosphate contacts are provided by histidine 41 and histidine 74. Residues histidine 41 and histidine 74 each coordinate isopentenyl diphosphate. Cysteine 96 contributes to the [4Fe-4S] cluster binding site. Histidine 124 contacts (2E)-4-hydroxy-3-methylbut-2-enyl diphosphate. Histidine 124 is a binding site for dimethylallyl diphosphate. Histidine 124 is a binding site for isopentenyl diphosphate. Glutamate 126 acts as the Proton donor in catalysis. Threonine 168 serves as a coordination point for (2E)-4-hydroxy-3-methylbut-2-enyl diphosphate. Cysteine 198 lines the [4Fe-4S] cluster pocket. Serine 226, serine 227, asparagine 228, and serine 270 together coordinate (2E)-4-hydroxy-3-methylbut-2-enyl diphosphate. Serine 226, serine 227, asparagine 228, and serine 270 together coordinate dimethylallyl diphosphate. Residues serine 226, serine 227, asparagine 228, and serine 270 each coordinate isopentenyl diphosphate.

The protein belongs to the IspH family. [4Fe-4S] cluster is required as a cofactor.

It catalyses the reaction isopentenyl diphosphate + 2 oxidized [2Fe-2S]-[ferredoxin] + H2O = (2E)-4-hydroxy-3-methylbut-2-enyl diphosphate + 2 reduced [2Fe-2S]-[ferredoxin] + 2 H(+). The enzyme catalyses dimethylallyl diphosphate + 2 oxidized [2Fe-2S]-[ferredoxin] + H2O = (2E)-4-hydroxy-3-methylbut-2-enyl diphosphate + 2 reduced [2Fe-2S]-[ferredoxin] + 2 H(+). The protein operates within isoprenoid biosynthesis; dimethylallyl diphosphate biosynthesis; dimethylallyl diphosphate from (2E)-4-hydroxy-3-methylbutenyl diphosphate: step 1/1. It functions in the pathway isoprenoid biosynthesis; isopentenyl diphosphate biosynthesis via DXP pathway; isopentenyl diphosphate from 1-deoxy-D-xylulose 5-phosphate: step 6/6. In terms of biological role, catalyzes the conversion of 1-hydroxy-2-methyl-2-(E)-butenyl 4-diphosphate (HMBPP) into a mixture of isopentenyl diphosphate (IPP) and dimethylallyl diphosphate (DMAPP). Acts in the terminal step of the DOXP/MEP pathway for isoprenoid precursor biosynthesis. This chain is 4-hydroxy-3-methylbut-2-enyl diphosphate reductase, found in Ectopseudomonas mendocina (strain ymp) (Pseudomonas mendocina).